The primary structure comprises 124 residues: Fluoride-specific ion channel FluC 2 (124 aa).

Helical transmembrane passes span 36-56, 66-86, and 100-120; these read TFLI…YLAF, LFVM…SLDT, and LYAI…LALV. Positions 74 and 77 each coordinate Na(+).

It belongs to the fluoride channel Fluc/FEX (TC 1.A.43) family.

The protein localises to the cell inner membrane. It carries out the reaction fluoride(in) = fluoride(out). Na(+) is not transported, but it plays an essential structural role and its presence is essential for fluoride channel function. Its function is as follows. Fluoride-specific ion channel. Important for reducing fluoride concentration in the cell, thus reducing its toxicity. The protein is Fluoride-specific ion channel FluC 2 of Nitrobacter hamburgensis (strain DSM 10229 / NCIMB 13809 / X14).